A 454-amino-acid polypeptide reads, in one-letter code: Inner membrane transport protein YajR (454 aa).

Residues 1-14 are Periplasmic-facing; it reads MNDYKMTPGERRAT. Residues 15–35 form a helical membrane-spanning segment; sequence WGLGTVFSLRMLGMFMVLPVL. Topologically, residues 36–47 are cytoplasmic; the sequence is TTYGMALQGASE. A helical membrane pass occupies residues 48 to 68; it reads ALIGIAIGIYGLTQAVFQIPF. Residues 69–84 lie on the Periplasmic side of the membrane; the sequence is GLLSDRIGRKPLIVGG. Residues 85–105 form a helical membrane-spanning segment; it reads LAVFAAGSVIAALSDSIWGII. At 106–137 the chain is on the cytoplasmic side; that stretch reads LGRALQGSGAIAAAVMALLSDLTREQNRTKAM. A helical membrane pass occupies residues 138-158; it reads AFIGVSFGITFAIAMVLGPII. The Periplasmic segment spans residues 159-165; sequence THKLGLH. The chain crosses the membrane as a helical span at residues 166-186; that stretch reads ALFWMIAILATTGIALTIWVV. Residues 187 to 216 lie on the Cytoplasmic side of the membrane; that stretch reads PNSSTHVLNRESGMVKGSFSKVLAEPRLLK. A helical membrane pass occupies residues 217–237; that stretch reads LNFGIMCLHILLMSTFVALPG. Topologically, residues 238–252 are periplasmic; the sequence is QLADAGFPAAEHWKV. Residues 253–273 traverse the membrane as a helical segment; sequence YLATMLIAFGSVVPFIIYAEV. At 274–279 the chain is on the cytoplasmic side; it reads KRKMKQ. The helical transmembrane segment at 280 to 300 threads the bilayer; it reads VFVFCVGLIVVAEIVLWNAQT. Topologically, residues 301 to 306 are periplasmic; the sequence is QFWQLV. A helical transmembrane segment spans residues 307–327; that stretch reads VGVQLFFVAFNLMEALLPSLI. The Cytoplasmic segment spans residues 328–340; it reads SKESPAGYKGTAM. Residues 341 to 361 traverse the membrane as a helical segment; sequence GVYSTSQFLGVAIGGSLGGWI. The Periplasmic segment spans residues 362–363; it reads NG. The helical transmembrane segment at 364–384 threads the bilayer; that stretch reads MFDGQGVFLAGAMLAAVWLTV. Over 385 to 454 the chain is Cytoplasmic; it reads ASTMKEPPYV…FEIEQAIRQA (70 aa).

The protein belongs to the major facilitator superfamily.

The protein localises to the cell inner membrane. In Escherichia coli (strain K12), this protein is Inner membrane transport protein YajR (yajR).